A 433-amino-acid chain; its full sequence is Transcription factor elt-2 (433 aa).

2 disordered regions span residues 1 to 47 and 194 to 235; these read MDNN…ELPR and GQPP…RQGL. Residues 27–43 show a composition bias toward polar residues; the sequence is PTQNMDPPEQNNESQLS. Residues 211 to 234 show a composition bias toward low complexity; that stretch reads AKQSSKKSSSSNRGSNGSASRRQG. The segment at 237–261 adopts a GATA-type zinc-finger fold; that stretch reads CSNCNGTNTTLWRRNAEGDPVCNAC. A disordered region spans residues 275–332; sequence SMKKEGALQTRKRKSKSGDSSTPSTSRARERKFERASSSTEKAQRSSNRRAGSAKADR. Residues 310–324 show a composition bias toward polar residues; sequence ASSSTEKAQRSSNRR.

In terms of assembly, interacts with lag-1. Interacts with pha-4. Interacts with rpt-6. Post-translationally, may be ubiquitinated in response to infection by B.pseudomallei. In terms of tissue distribution, expressed in the intestine.

It localises to the nucleus. Functionally, transcriptional activator that binds to the consensus sequence 5'-[AT]GATA[AG]-3'. Predominantly directs the transcription of intestinal genes such as ges-1, cpr-6, pho-1, ftn-1, vit-2 and lev-11, and itself. Required for gut-specific differentiation, specifically acting with the GATA region-binding transcription factor elt-7 to control normal gene expression and promote normal formation of the intestine. Regulates intestinal gene expression in response to hypoxia to promote longevity. Modulation of longevity may, in part, be the result of regulation of expression of daf-16 isoforms d and f in the intestine. Regulates tissue specific gene expression at basal levels and in response to bacterial infection in the intestine to control innate immunity. Plays a role in the induction of metal-responsive genes, activating gene expression from zinc-activated promoters and iron-dependent promoters and enhancers. May regulate the expression of genes that control sensitivity to oxidative stress, in a mab-3-dependent manner, and osmotic stress, in conjunction with the GATA region-binding transcription factor elt-3. May play a role in sphingolipid signaling by regulating the expression of the sphingosine-1-phosphate degrading enzyme, sphingosine-1-phosphate lyase. May act with the Notch signaling pathway to promote endodermal gene expression. Has a protective role in response to infection by Gram-negative bacteria such as S.enterica, E.coli, P.aeruginosa and B.pseudomallei, Gram-positive bacterium E.faecalis and fungal pathogen C.neoformans. An association with the 26S proteasome regulatory subunit rpt-6, in part, controls gene expression in response to infection by P.aeruginosa. Regulates gene expression during the recovery phase following a bacterial infection. May act with p38-activated transcription factors to control p38 gene induction in response to bacterial infection. Controls lysosome formation in the intestine by controlling lysosomal gene expression. In Caenorhabditis elegans, this protein is Transcription factor elt-2.